A 126-amino-acid polypeptide reads, in one-letter code: Aspartate 1-decarboxylase (126 aa).

The active-site Schiff-base intermediate with substrate; via pyruvic acid is S25. A Pyruvic acid (Ser) modification is found at S25. Position 57 (T57) interacts with substrate. Y58 serves as the catalytic Proton donor. Position 73 to 75 (73 to 75) interacts with substrate; sequence GAA.

It belongs to the PanD family. Heterooctamer of four alpha and four beta subunits. The cofactor is pyruvate. In terms of processing, is synthesized initially as an inactive proenzyme, which is activated by self-cleavage at a specific serine bond to produce a beta-subunit with a hydroxyl group at its C-terminus and an alpha-subunit with a pyruvoyl group at its N-terminus.

It localises to the cytoplasm. It catalyses the reaction L-aspartate + H(+) = beta-alanine + CO2. It participates in cofactor biosynthesis; (R)-pantothenate biosynthesis; beta-alanine from L-aspartate: step 1/1. Functionally, catalyzes the pyruvoyl-dependent decarboxylation of aspartate to produce beta-alanine. The chain is Aspartate 1-decarboxylase from Citrobacter koseri (strain ATCC BAA-895 / CDC 4225-83 / SGSC4696).